The following is a 1313-amino-acid chain: Inactive protein tyrosine kinase pTKL (1313 aa).

2 MORN repeats span residues 20 to 42 and 45 to 63; these read YAGD…ENGN and FGHF…IDKN. Residues Asn63, Asn131, Asn178, Asn208, Asn254, Asn260, and Asn288 are each glycosylated (N-linked (GlcNAc...) asparagine). The region spanning 300–365 is the SAM domain; the sequence is WNKEQVAQWL…LQLIKNLRVT (66 aa). Asn466, Asn516, Asn525, Asn528, and Asn534 each carry an N-linked (GlcNAc...) asparagine glycan. Residues 569 to 580 are compositionally biased toward basic and acidic residues; the sequence is EPIKPNKEKEEN. The tract at residues 569 to 631 is disordered; it reads EPIKPNKEKE…SEKSSETSSE (63 aa). Residues 586–604 show a composition bias toward polar residues; sequence PIINSKNETNLLNDSNPTK. N-linked (GlcNAc...) asparagine glycans are attached at residues Asn592, Asn598, Asn661, Asn678, Asn729, Asn735, and Asn749. ATP is bound at residue Lys782. Residues Asn790, Asn868, Asn940, Asn983, and Asn1000 are each glycosylated (N-linked (GlcNAc...) asparagine). The region spanning 962–1294 is the Protein kinase domain; sequence FRNKNNILCG…FDRILIEISM (333 aa). The RVxF motif signature appears at 1052–1055; the sequence is KILF. Residues Asn1191 and Asn1198 are each glycosylated (N-linked (GlcNAc...) asparagine).

The protein belongs to the protein kinase superfamily. TKL Ser/Thr protein kinase family.

The protein localises to the parasitophorous vacuole. Its subcellular location is the host cell membrane. The protein resides in the host cytoplasm. It is found in the host cytoskeleton. The sequence is that of Inactive protein tyrosine kinase pTKL from Plasmodium berghei (strain Anka).